A 126-amino-acid polypeptide reads, in one-letter code: UPF0332 protein glr0978 (126 aa).

The protein belongs to the UPF0332 family.

In Gloeobacter violaceus (strain ATCC 29082 / PCC 7421), this protein is UPF0332 protein glr0978.